We begin with the raw amino-acid sequence, 521 residues long: Protein translocase subunit SecD (521 aa).

6 helical membrane-spanning segments follow: residues 8–28 (LKLASVLGVCLLGLLLCLPNG), 359–379 (AGILSLGVGFLLVVVFMVLFY), 388–408 (IALLANLVLMVAILSLFEATL), 410–430 (LPGMAGMLLTLGMAVDANILI), 459–479 (IVDSNATAFLAHVMLFVFGTG), and 483–503 (GFALTITIGIATTLFTTLLLS).

It belongs to the SecD/SecF family. SecD subfamily. In terms of assembly, forms a complex with SecF. Part of the essential Sec protein translocation apparatus which comprises SecA, SecYEG and auxiliary proteins SecDF-YajC and YidC.

It is found in the cell inner membrane. Part of the Sec protein translocase complex. Interacts with the SecYEG preprotein conducting channel. SecDF uses the proton motive force (PMF) to complete protein translocation after the ATP-dependent function of SecA. The protein is Protein translocase subunit SecD of Acetobacter pasteurianus (strain NBRC 105184 / IFO 3283-01).